The primary structure comprises 364 residues: Protein FAM81A (364 aa).

Residues 80–107 are a coiled coil; sequence IRNITAIVKQLNRDIEVLQEQIRARDNI. The segment covering 275 to 300 has biased composition (basic and acidic residues); the sequence is ARLDKIEESQRRNAEGQRKPEEEKVH. A disordered region spans residues 275 to 301; that stretch reads ARLDKIEESQRRNAEGQRKPEEEKVHG.

It belongs to the FAM81 family. As to quaternary structure, interacts with DLG4/PSD-95, GRIN2B/GLUN2B and SYNGAP1; the interactions facilitate condensate formation. As to expression, highly expressed in brain (at protein level).

It localises to the postsynaptic density. Its subcellular location is the cytoplasm. Its function is as follows. Facilitates the interaction and assembly of proteins within the postsynaptic density by promoting the condensation of postsynaptic proteins via liquid-liquid phase separation. Required for neuronal activity. Accumulation at the postsynaptic density results in enlargement of dendritic spines. This Rattus norvegicus (Rat) protein is Protein FAM81A.